The primary structure comprises 65 residues: Hirudin-3A (65 aa).

The interval 1–3 (VVY) is interaction with thrombin active site. Disulfide bonds link Cys-6–Cys-14, Cys-16–Cys-28, and Cys-22–Cys-39. Positions 39–65 (CVTGEGTPKPQSHNDGDFEEIPEEYLQ) are disordered. Residue Thr-45 is glycosylated (O-linked (GalNAc...) threonine). Positions 55–65 (DFEEIPEEYLQ) are interaction with fibrinogen-binding exosite of thrombin. Acidic residues predominate over residues 55–65 (DFEEIPEEYLQ). At Tyr-63 the chain carries Sulfotyrosine.

This sequence belongs to the protease inhibitor I14 (hirudin) family.

It is found in the secreted. Its function is as follows. Hirudin is a potent thrombin-specific protease inhibitor. It forms a stable non-covalent complex with alpha-thrombin, thereby abolishing its ability to cleave fibrinogen. The chain is Hirudin-3A from Hirudo medicinalis (Medicinal leech).